We begin with the raw amino-acid sequence, 160 residues long: Transcription elongation factor GreA (160 aa).

Residues S49–A75 adopt a coiled-coil conformation.

It belongs to the GreA/GreB family.

Necessary for efficient RNA polymerase transcription elongation past template-encoded arresting sites. The arresting sites in DNA have the property of trapping a certain fraction of elongating RNA polymerases that pass through, resulting in locked ternary complexes. Cleavage of the nascent transcript by cleavage factors such as GreA or GreB allows the resumption of elongation from the new 3'terminus. GreA releases sequences of 2 to 3 nucleotides. The protein is Transcription elongation factor GreA of Clostridium beijerinckii (strain ATCC 51743 / NCIMB 8052) (Clostridium acetobutylicum).